The following is a 1076-amino-acid chain: MKEVTANFSAKDIEREVQEYWRTHDTYKAVKEQHSAGRAFFFVDGPPYTTGQIHLGTAWNKIIKDSILRYHRMNGRNVIDRAGYDMHGLPIEVKVEQKLGFASKKDIETFGIEKFINECREFAIKNKELMDAQFENLGIWMDFKNAYQTIKPWYVEAAWWTLAKAQEKGMLERGYRVVNWCPRCETAIADAEVEYWDETDPSVFVKFPIRGKVSESLVIWTTTPWTLPANVAVAVGKEFVYARVHAEKNGREEYLWVAEDLVKSVLKKGRYQKFETLETKKGAELIGWEYDSPLMDVVPIQKEIAHRVVAADFVAMENTGMVHIAPGHGWDDYVLGTKEKLAIVCPVDGAGKFRPETGIFAGKFVRDANGEVLDALGERLLATEKITHRYGHCWRCKTPIIFRATSQWFLKASEMRDLMLSEVKKVTWYPEWAGSARFYDWIKEARDWCVSRQRYWGIPIPVWICDKCDKYRVIGTIAELEKASGQKVPDPHRPFVDQVTIPCECGGTMKRVGDIFDVWFDSAVASWATVGFPAKTDEFEKLWPADFITEGQDQTRGWFYSQLGASTIAFGKAPYKSVCMHGFALDAEGRKMSKSLGNVVAPEEVIAKVGVDVLRLYVLSSSAPWDDLKFNWDGIATVNRTMNILWNVYRFPMPYMILDRFEPEAKSGHWDGSFVRSHIRELPDEDRWIVSRINTVAGIVDASTKECQLHRATREILNFILEDLSRWYVQLVRPRMWLEGESEQKIFAYETIYYVMRRLVDLMAPFAPHITEEIYSNLRCKNDPGSVHMLDWQACDDALTNRELEHAMELVRSFDDAVQNARQAGKRKLRWPVDEVVIVTAKPEVKDAVARLNEVCMDRANARKVTVVIGRWDRIGWHAEPVMKALGKGFGKNSFAVKGLIEAADGNAIKAAVDAGQKFQLKIEEGKISKPDDLKIGTDYEQDVVEIGIEHVRFTEKLPTDIFSAPMEDGTVYVDVALTPDLEAEGYAREIIRRIQEMRRQLDLAVEDFIMVDVAVADKRICELVGASWKPGIADEVRAKTLSLHHSAEPAGSSHQLAKDWDVEGIAMTIGISKVA.

Residues 47–57 carry the 'HIGH' region motif; that stretch reads PYTTGQIHLGT. The 'KMSKS' region motif lies at 591–595; that stretch reads KMSKS. Lys594 is an ATP binding site.

This sequence belongs to the class-I aminoacyl-tRNA synthetase family. IleS type 2 subfamily. In terms of assembly, monomer. The cofactor is Zn(2+).

The protein localises to the cytoplasm. It carries out the reaction tRNA(Ile) + L-isoleucine + ATP = L-isoleucyl-tRNA(Ile) + AMP + diphosphate. Functionally, catalyzes the attachment of isoleucine to tRNA(Ile). As IleRS can inadvertently accommodate and process structurally similar amino acids such as valine, to avoid such errors it has two additional distinct tRNA(Ile)-dependent editing activities. One activity is designated as 'pretransfer' editing and involves the hydrolysis of activated Val-AMP. The other activity is designated 'posttransfer' editing and involves deacylation of mischarged Val-tRNA(Ile). The sequence is that of Isoleucine--tRNA ligase from Methanoregula boonei (strain DSM 21154 / JCM 14090 / 6A8).